The following is a 142-amino-acid chain: Hemoglobin subunit alpha (142 aa).

An N-acetylserine modification is found at S1. One can recognise a Globin domain in the interval 1–142 (SLSDKDKAAV…VALALAERYR (142 aa)). H59 contacts O2. Heme b is bound at residue H88.

This sequence belongs to the globin family. In terms of assembly, hb1 is a heterotetramer of two alpha chains and two beta-1 chains, while Hb2 is a heterotetramer of two alpha chains and two beta-2 chains. Red blood cells.

In terms of biological role, involved in oxygen transport from gills to the various peripheral tissues. This Cygnodraco mawsoni (Antarctic dragonfish) protein is Hemoglobin subunit alpha (hba).